The sequence spans 163 residues: Nucleotide-binding protein DvMF_3058 (163 aa).

The protein belongs to the YajQ family.

Functionally, nucleotide-binding protein. The chain is Nucleotide-binding protein DvMF_3058 from Nitratidesulfovibrio vulgaris (strain DSM 19637 / Miyazaki F) (Desulfovibrio vulgaris).